The following is a 218-amino-acid chain: Monomethylamine corrinoid protein 1 (218 aa).

Positions 1–91 (MANQEIFDKL…ELEKTKVEGE (91 aa)) constitute a B12-binding N-terminal domain. The region spanning 94–218 (TGLAITFVAE…AAKVALNIMK (125 aa)) is the B12-binding domain. Position 107 (His107) interacts with methylcob(III)alamin.

It belongs to the methylamine corrinoid protein family. As to quaternary structure, can form a complex with MtmB.

It functions in the pathway one-carbon metabolism; methanogenesis from methylamine. In terms of biological role, acts as a methyl group carrier between MtmB and MtbA. The sequence is that of Monomethylamine corrinoid protein 1 (mtmC1) from Methanosarcina mazei (strain ATCC BAA-159 / DSM 3647 / Goe1 / Go1 / JCM 11833 / OCM 88) (Methanosarcina frisia).